A 434-amino-acid polypeptide reads, in one-letter code: GTPase Obg (434 aa).

The Obg domain occupies 1–158 (MFIDRAKIYV…RWLYLELKLL (158 aa)). The region spanning 159-328 (ADVGLLGLPN…LLELMEKYVK (170 aa)) is the OBG-type G domain. Residues 165 to 172 (GLPNAGKS), 190 to 194 (FTTKT), 211 to 214 (DIPG), 280 to 283 (NKID), and 309 to 311 (SAK) contribute to the GTP site. Mg(2+) is bound by residues S172 and T192. Positions 347-425 (KQENKKQEIP…IGNYVFKYNS (79 aa)) constitute an OCT domain.

The protein belongs to the TRAFAC class OBG-HflX-like GTPase superfamily. OBG GTPase family. Monomer. Mg(2+) is required as a cofactor.

Its subcellular location is the cytoplasm. Functionally, an essential GTPase which binds GTP, GDP and possibly (p)ppGpp with moderate affinity, with high nucleotide exchange rates and a fairly low GTP hydrolysis rate. Plays a role in control of the cell cycle, stress response, ribosome biogenesis and in those bacteria that undergo differentiation, in morphogenesis control. The polypeptide is GTPase Obg (Dictyoglomus turgidum (strain DSM 6724 / Z-1310)).